The sequence spans 211 residues: NADH-quinone oxidoreductase subunit I (211 aa).

4Fe-4S ferredoxin-type domains lie at 90–119 (RLWESDTERCIGCGLCEKICISNCIRIDTK) and 129–158 (TEYSINLGRCIFCGYCAEVCPELAITHGGE). 8 residues coordinate [4Fe-4S] cluster: Cys99, Cys102, Cys105, Cys109, Cys138, Cys141, Cys144, and Cys148.

Belongs to the complex I 23 kDa subunit family. NDH-1 is composed of 14 different subunits. Subunits NuoA, H, J, K, L, M, N constitute the membrane sector of the complex. It depends on [4Fe-4S] cluster as a cofactor.

It is found in the cell inner membrane. The enzyme catalyses a quinone + NADH + 5 H(+)(in) = a quinol + NAD(+) + 4 H(+)(out). Functionally, NDH-1 shuttles electrons from NADH, via FMN and iron-sulfur (Fe-S) centers, to quinones in the respiratory chain. The immediate electron acceptor for the enzyme in this species is believed to be ubiquinone. Couples the redox reaction to proton translocation (for every two electrons transferred, four hydrogen ions are translocated across the cytoplasmic membrane), and thus conserves the redox energy in a proton gradient. In Sulfurimonas denitrificans (strain ATCC 33889 / DSM 1251) (Thiomicrospira denitrificans (strain ATCC 33889 / DSM 1251)), this protein is NADH-quinone oxidoreductase subunit I.